Here is a 357-residue protein sequence, read N- to C-terminus: UDP-xylose transporter 3 (357 aa).

A run of 10 helical transmembrane segments spans residues 7–27, 31–51, 75–95, 100–120, 132–152, 154–174, 194–214, 224–244, 250–270, and 280–300; these read FQLG…SIVI, ALIS…HLLV, VMGF…SLGF, FYQM…TLFF, LTIL…LNML, SVLS…TNTI, AITL…QNVF, FFIV…FLVI, VTYQ…GYVL, and ILGI…CSIE. The residue at position 334 (Ser334) is a Phosphoserine.

The protein belongs to the TPT transporter family. TPT (TC 2.A.7.9) subfamily. As to expression, ubiquitous.

The protein localises to the golgi apparatus membrane. Nucleotide-sugar transporter that transports UDP-xylose and UMP in a strict counter-exchange mode. The chain is UDP-xylose transporter 3 from Arabidopsis thaliana (Mouse-ear cress).